Consider the following 301-residue polypeptide: Oxygen-dependent coproporphyrinogen-III oxidase (301 aa).

Ser-94 is a substrate binding site. Positions 98 and 108 each coordinate a divalent metal cation. His-108 (proton donor) is an active-site residue. 110-112 (NVR) lines the substrate pocket. A divalent metal cation-binding residues include His-147 and His-177. The interval 242–277 (YVEFNLVYDRGTLFGLQSGGRTESILMSMPPLARWE) is important for dimerization. 260–262 (GGR) is a substrate binding site.

This sequence belongs to the aerobic coproporphyrinogen-III oxidase family. Homodimer. A divalent metal cation serves as cofactor.

It localises to the cytoplasm. It catalyses the reaction coproporphyrinogen III + O2 + 2 H(+) = protoporphyrinogen IX + 2 CO2 + 2 H2O. Its pathway is porphyrin-containing compound metabolism; protoporphyrin-IX biosynthesis; protoporphyrinogen-IX from coproporphyrinogen-III (O2 route): step 1/1. Involved in the heme biosynthesis. Catalyzes the aerobic oxidative decarboxylation of propionate groups of rings A and B of coproporphyrinogen-III to yield the vinyl groups in protoporphyrinogen-IX. The sequence is that of Oxygen-dependent coproporphyrinogen-III oxidase from Photobacterium profundum (strain SS9).